The following is a 341-amino-acid chain: Glyceraldehyde-3-phosphate dehydrogenase 2 (341 aa).

Residues 12-13 (RI), Arg-78, and Thr-120 each bind NAD(+). D-glyceraldehyde 3-phosphate-binding positions include 152 to 154 (SCT) and Thr-183. Catalysis depends on Cys-153, which acts as the Nucleophile. Asn-184 lines the NAD(+) pocket. D-glyceraldehyde 3-phosphate is bound by residues Arg-198, 211 to 212 (TG), and Arg-234. An NAD(+)-binding site is contributed by Asn-313.

This sequence belongs to the glyceraldehyde-3-phosphate dehydrogenase family. As to quaternary structure, homotetramer.

The protein localises to the cytoplasm. The catalysed reaction is D-glyceraldehyde 3-phosphate + phosphate + NAD(+) = (2R)-3-phospho-glyceroyl phosphate + NADH + H(+). The protein operates within carbohydrate degradation; glycolysis; pyruvate from D-glyceraldehyde 3-phosphate: step 1/5. Its function is as follows. Catalyzes the oxidative phosphorylation of glyceraldehyde 3-phosphate (G3P) to 1,3-bisphosphoglycerate (BPG) using the cofactor NAD. The first reaction step involves the formation of a hemiacetal intermediate between G3P and a cysteine residue, and this hemiacetal intermediate is then oxidized to a thioester, with concomitant reduction of NAD to NADH. The reduced NADH is then exchanged with the second NAD, and the thioester is attacked by a nucleophilic inorganic phosphate to produce BPG. The polypeptide is Glyceraldehyde-3-phosphate dehydrogenase 2 (gapA2) (Staphylococcus aureus (strain COL)).